A 360-amino-acid polypeptide reads, in one-letter code: Heat-inducible transcription repressor HrcA (360 aa).

The protein belongs to the HrcA family.

In terms of biological role, negative regulator of class I heat shock genes (grpE-dnaK-dnaJ and groELS operons). Prevents heat-shock induction of these operons. The sequence is that of Heat-inducible transcription repressor HrcA from Gloeobacter violaceus (strain ATCC 29082 / PCC 7421).